Reading from the N-terminus, the 946-residue chain is Nonribosomal peptide synthetase pngA (946 aa).

Positions alanine 32–valine 450 are adenylation (A) domain. The Carrier domain occupies glutamine 580–alanine 659. Serine 618 bears the O-(pantetheine 4'-phosphoryl)serine mark. Residues proline 681 to phenylalanine 933 form a thioesterase (TE) domain region.

It belongs to the NRP synthetase family.

It catalyses the reaction 2 3-phenylpyruvate + H(+) = phenguignardate + H2O. Nonribosomal peptide synthetase that mediates the biosynthesis of phenguignardic acid. PngA alone is sufficient for phenguignardic acid synthesis. PngA first activates phenylpyruvic acid (PPA) through its A domain to AMP-PPA. The PPA unit is then loaded to the T domain and eventually transferred to the TE domain. Another PPA unit is then loaded onto the T domain. The TE domain likely promotes the enolate formation on the attached unit, followed by a nucleophilic attack on the carbonyl to yield an ether linkage between the two units. Finally, the TE domain probably catalyzes a similar reaction to give the cyclized dioxolanone core and releases phenguignardic acid. This is Nonribosomal peptide synthetase pngA from Aspergillus terreus (strain NIH 2624 / FGSC A1156).